A 173-amino-acid chain; its full sequence is Small ribosomal subunit protein uS5 (173 aa).

Positions 17–80 constitute an S5 DRBM domain; the sequence is WQERVIQIRR…ADGKKQLIEV (64 aa).

This sequence belongs to the universal ribosomal protein uS5 family. As to quaternary structure, part of the 30S ribosomal subunit. Contacts proteins S4 and S8.

Its function is as follows. With S4 and S12 plays an important role in translational accuracy. Functionally, located at the back of the 30S subunit body where it stabilizes the conformation of the head with respect to the body. The sequence is that of Small ribosomal subunit protein uS5 from Synechocystis sp. (strain ATCC 27184 / PCC 6803 / Kazusa).